A 332-amino-acid polypeptide reads, in one-letter code: D-lactate dehydrogenase (332 aa).

NAD(+)-binding positions include 155–156, aspartate 175, 206–207, asparagine 212, and 233–235; these read RI, VP, and FAR. Residues arginine 235 and glutamate 264 contribute to the active site. Catalysis depends on histidine 296, which acts as the Proton donor.

This sequence belongs to the D-isomer specific 2-hydroxyacid dehydrogenase family. As to quaternary structure, homodimer.

It carries out the reaction (R)-lactate + NAD(+) = pyruvate + NADH + H(+). The protein is D-lactate dehydrogenase of Lactiplantibacillus pentosus (Lactobacillus pentosus).